A 254-amino-acid polypeptide reads, in one-letter code: Leucyl/phenylalanyl-tRNA--protein transferase (254 aa).

Belongs to the L/F-transferase family.

The protein localises to the cytoplasm. It carries out the reaction N-terminal L-lysyl-[protein] + L-leucyl-tRNA(Leu) = N-terminal L-leucyl-L-lysyl-[protein] + tRNA(Leu) + H(+). It catalyses the reaction N-terminal L-arginyl-[protein] + L-leucyl-tRNA(Leu) = N-terminal L-leucyl-L-arginyl-[protein] + tRNA(Leu) + H(+). The catalysed reaction is L-phenylalanyl-tRNA(Phe) + an N-terminal L-alpha-aminoacyl-[protein] = an N-terminal L-phenylalanyl-L-alpha-aminoacyl-[protein] + tRNA(Phe). In terms of biological role, functions in the N-end rule pathway of protein degradation where it conjugates Leu, Phe and, less efficiently, Met from aminoacyl-tRNAs to the N-termini of proteins containing an N-terminal arginine or lysine. This Burkholderia ambifaria (strain MC40-6) protein is Leucyl/phenylalanyl-tRNA--protein transferase.